The following is a 692-amino-acid chain: Threonine--tRNA ligase (692 aa).

Residues 1–20 (MSAPAQPAPGVDGGDPSQAR) form a disordered region. In terms of domain architecture, TGS spans 1 to 74 (MSAPAQPAPG…DVDTDITPVA (74 aa)). The tract at residues 269-575 (DHRKLGVELD…LTEHYAGAFP (307 aa)) is catalytic. The Zn(2+) site is built by Cys374, His425, and His552.

Belongs to the class-II aminoacyl-tRNA synthetase family. Homodimer. The cofactor is Zn(2+).

Its subcellular location is the cytoplasm. The enzyme catalyses tRNA(Thr) + L-threonine + ATP = L-threonyl-tRNA(Thr) + AMP + diphosphate + H(+). Its function is as follows. Catalyzes the attachment of threonine to tRNA(Thr) in a two-step reaction: L-threonine is first activated by ATP to form Thr-AMP and then transferred to the acceptor end of tRNA(Thr). Also edits incorrectly charged L-seryl-tRNA(Thr). This Mycobacterium tuberculosis (strain CDC 1551 / Oshkosh) protein is Threonine--tRNA ligase.